The following is a 101-amino-acid chain: NADH-quinone oxidoreductase subunit K (101 aa).

A run of 3 helical transmembrane segments spans residues 4 to 24 (LSHY…GIFL), 30 to 50 (IVLL…FIAF), and 61 to 81 (VFVF…LAIL).

Belongs to the complex I subunit 4L family. NDH-1 is composed of 14 different subunits. Subunits NuoA, H, J, K, L, M, N constitute the membrane sector of the complex.

Its subcellular location is the cell inner membrane. The enzyme catalyses a quinone + NADH + 5 H(+)(in) = a quinol + NAD(+) + 4 H(+)(out). Its function is as follows. NDH-1 shuttles electrons from NADH, via FMN and iron-sulfur (Fe-S) centers, to quinones in the respiratory chain. The immediate electron acceptor for the enzyme in this species is believed to be ubiquinone. Couples the redox reaction to proton translocation (for every two electrons transferred, four hydrogen ions are translocated across the cytoplasmic membrane), and thus conserves the redox energy in a proton gradient. The polypeptide is NADH-quinone oxidoreductase subunit K (Azoarcus sp. (strain BH72)).